Consider the following 397-residue polypeptide: G2/mitotic-specific cyclin-B1 (397 aa).

Polar residues predominate over residues 1–17 (MALRVTRNTRLASSENQ). The interval 1–30 (MALRVTRNTRLASSENQGALPGKAAVANKP) is disordered.

This sequence belongs to the cyclin family. Cyclin AB subfamily. In terms of assembly, interacts with the CDK1 protein kinase to form a serine/threonine kinase holoenzyme complex also known as maturation promoting factor (MPF). The cyclin subunit imparts substrate specificity to the complex.

Its function is as follows. Essential for the control of the cell cycle at the G2/M (mitosis) transition. In Carassius auratus (Goldfish), this protein is G2/mitotic-specific cyclin-B1 (ccnb1).